The primary structure comprises 257 residues: Protein IMPACT homolog (257 aa).

The RWD domain maps to 9–102; that stretch reads AEIESLASIF…SLVQDFIRDL (94 aa).

It belongs to the IMPACT family. As to quaternary structure, interacts with gcn-1; prevents the interaction of gcn-1 with gcn-2 and inhibits gcn-2 kinase activity. Interaction with rpl-39; this interaction occurs in a gcn-1-independent manner. Associates with ribosomes; this interaction occurs in a gcn-1-independent manner. Associates with actin; this interaction occurs in a gcn-1-independent manner.

It is found in the cytoplasm. Functionally, translational regulator that ensures constant high levels of translation under amino acid starvation. Plays a role as a negative regulator of the gcn-2 kinase activity; impairs gcn-1-mediated gcn-2 activation, and hence gcn-2-mediated eIF-2-alpha phosphorylation and subsequent down-regulation of protein synthesis in amino acid-starved cells. Plays a role in differentiation of neuronal cells by stimulating neurite outgrowth. The polypeptide is Protein IMPACT homolog (Caenorhabditis elegans).